The chain runs to 210 residues: Large ribosomal subunit protein uL3 (210 aa).

Residues 136–156 form a disordered region; sequence THGTEKAHRSGGSIGNNTEPG.

The protein belongs to the universal ribosomal protein uL3 family. In terms of assembly, part of the 50S ribosomal subunit. Forms a cluster with proteins L14 and L19.

Functionally, one of the primary rRNA binding proteins, it binds directly near the 3'-end of the 23S rRNA, where it nucleates assembly of the 50S subunit. This Solidesulfovibrio magneticus (strain ATCC 700980 / DSM 13731 / RS-1) (Desulfovibrio magneticus) protein is Large ribosomal subunit protein uL3.